The sequence spans 883 residues: EEF1AKMT4-ECE2 readthrough transcript protein (883 aa).

The interval 1–160 is methyltransferase-like region; the sequence is MASPGAGRAP…VHTVDQVLSE (160 aa). Over 1-178 the chain is Cytoplasmic; sequence MASPGAGRAP…QLLGSRTQLE (178 aa). S-adenosyl-L-methionine is bound by residues Trp-26 and Tyr-30. Tyr-39 carries the post-translational modification Phosphotyrosine. S-adenosyl-L-methionine contacts are provided by residues Trp-41, Gly-66, 88 to 89, 113 to 114, and Lys-130; these read DY and DV. Residues 179-199 form a helical membrane-spanning segment; sequence LVLAGASLLLAALLLGCLVAL. Over 200–883 the chain is Lumenal; sequence GVQYHRDPSH…MNPGQLCEVW (684 aa). The region spanning 211-883 is the Peptidase M13 domain; the sequence is TCLTEACIRV…MNPGQLCEVW (673 aa). Cystine bridges form between Cys-212–Cys-217, Cys-235–Cys-868, Cys-243–Cys-828, Cys-299–Cys-548, and Cys-757–Cys-880. N-linked (GlcNAc...) asparagine glycans are attached at residues Asn-279, Asn-283, Asn-324, Asn-384, Asn-429, Asn-496, and Asn-652. His-720 is a Zn(2+) binding site. Glu-721 is a catalytic residue. His-724 serves as a coordination point for Zn(2+). Residues Asn-745 and Asn-753 are each glycosylated (N-linked (GlcNAc...) asparagine). Glu-780 contributes to the Zn(2+) binding site. Asp-784 serves as the catalytic Proton donor.

The protein in the N-terminal section; belongs to the methyltransferase superfamily. It in the C-terminal section; belongs to the peptidase M13 family. The cofactor is Zn(2+).

Its subcellular location is the golgi apparatus membrane. The protein localises to the cytoplasmic vesicle. The protein resides in the secretory vesicle membrane. The enzyme catalyses Hydrolysis of the 21-Trp-|-Val-22 bond in big endothelin to form endothelin 1.. Its activity is regulated as follows. Inhibited by phosphoramidon. Its function is as follows. Converts big endothelin-1 to endothelin-1. May also have methyltransferase activity. May play a role in amyloid-beta processing. The protein is EEF1AKMT4-ECE2 readthrough transcript protein of Homo sapiens (Human).